The sequence spans 131 residues: ER membrane protein complex subunit 5 (131 aa).

At M1–P3 the chain is on the cytoplasmic side. Residues S4–L22 form a helical membrane-spanning segment. Residues S23–I43 are Lumenal-facing. The chain crosses the membrane as a helical span at residues D44 to I63. The Cytoplasmic segment spans residues A64–R131. Residue S120 is modified to Phosphoserine.

The protein belongs to the membrane magnesium transporter (TC 1.A.67) family. Component of the ER membrane protein complex (EMC).

It is found in the endoplasmic reticulum membrane. The protein localises to the golgi apparatus membrane. Its subcellular location is the early endosome membrane. Functionally, part of the endoplasmic reticulum membrane protein complex (EMC) that enables the energy-independent insertion into endoplasmic reticulum membranes of newly synthesized membrane proteins. Preferentially accommodates proteins with transmembrane domains that are weakly hydrophobic or contain destabilizing features such as charged and aromatic residues. Involved in the cotranslational insertion of multi-pass membrane proteins in which stop-transfer membrane-anchor sequences become ER membrane spanning helices. It is also required for the post-translational insertion of tail-anchored/TA proteins in endoplasmic reticulum membranes. By mediating the proper cotranslational insertion of N-terminal transmembrane domains in an N-exo topology, with translocated N-terminus in the lumen of the ER, controls the topology of multi-pass membrane proteins like the G protein-coupled receptors. By regulating the insertion of various proteins in membranes, it is indirectly involved in many cellular processes. May be involved in Mg(2+) transport. The sequence is that of ER membrane protein complex subunit 5 from Pongo abelii (Sumatran orangutan).